Reading from the N-terminus, the 703-residue chain is Methionine--tRNA ligase (703 aa).

Positions 15–25 match the 'HIGH' region motif; that stretch reads PYANGPVHLGH. Zn(2+) contacts are provided by C147, C150, C160, and C163. A 'KMSKS' region motif is present at residues 345–349; it reads KFSKS. An ATP-binding site is contributed by K348. The tRNA-binding domain occupies 602-703; the sequence is DFQKIDLRVA…GEGINGNSVS (102 aa).

It belongs to the class-I aminoacyl-tRNA synthetase family. MetG type 1 subfamily. As to quaternary structure, homodimer. Requires Zn(2+) as cofactor.

It localises to the cytoplasm. The catalysed reaction is tRNA(Met) + L-methionine + ATP = L-methionyl-tRNA(Met) + AMP + diphosphate. In terms of biological role, is required not only for elongation of protein synthesis but also for the initiation of all mRNA translation through initiator tRNA(fMet) aminoacylation. This Chlorobaculum tepidum (strain ATCC 49652 / DSM 12025 / NBRC 103806 / TLS) (Chlorobium tepidum) protein is Methionine--tRNA ligase.